Reading from the N-terminus, the 308-residue chain is HTH-type transcriptional regulator YtlI (308 aa).

The 57-residue stretch at 1-57 (MELRSIKTFHTIVKFGSFYKAAEILNYSQPTISMRMKQLEQDLGVLLFERGKSLQLT) folds into the HTH lysR-type domain. A DNA-binding region (H-T-H motif) is located at residues 18 to 37 (FYKAAEILNYSQPTISMRMK).

This sequence belongs to the LysR transcriptional regulatory family.

Positively regulates the expression of ytmI operon in response to the availability of sulfur sources. This Bacillus subtilis (strain 168) protein is HTH-type transcriptional regulator YtlI (ytlI).